We begin with the raw amino-acid sequence, 201 residues long: Small ribosomal subunit protein uS4 (201 aa).

Residues 21–43 (GTGKELNRRPYAPGDHGQGRRQK) are disordered. The S4 RNA-binding domain maps to 93–153 (RRLDNMVYRL…EKSKDMAIIK (61 aa)).

It belongs to the universal ribosomal protein uS4 family. As to quaternary structure, part of the 30S ribosomal subunit. Contacts protein S5. The interaction surface between S4 and S5 is involved in control of translational fidelity.

In terms of biological role, one of the primary rRNA binding proteins, it binds directly to 16S rRNA where it nucleates assembly of the body of the 30S subunit. Its function is as follows. With S5 and S12 plays an important role in translational accuracy. The chain is Small ribosomal subunit protein uS4 from Levilactobacillus brevis (strain ATCC 367 / BCRC 12310 / CIP 105137 / JCM 1170 / LMG 11437 / NCIMB 947 / NCTC 947) (Lactobacillus brevis).